A 175-amino-acid polypeptide reads, in one-letter code: Large ribosomal subunit protein uL10 (175 aa).

Belongs to the universal ribosomal protein uL10 family. As to quaternary structure, part of the ribosomal stalk of the 50S ribosomal subunit. The N-terminus interacts with L11 and the large rRNA to form the base of the stalk. The C-terminus forms an elongated spine to which L12 dimers bind in a sequential fashion forming a multimeric L10(L12)X complex.

Forms part of the ribosomal stalk, playing a central role in the interaction of the ribosome with GTP-bound translation factors. The protein is Large ribosomal subunit protein uL10 of Synechococcus elongatus (strain ATCC 33912 / PCC 7942 / FACHB-805) (Anacystis nidulans R2).